A 183-amino-acid chain; its full sequence is Ribosome rescue factor SmrB (183 aa).

Residues 98 to 173 (LDLHGLTQLQ…GDAALLVLIE (76 aa)) enclose the Smr domain.

Belongs to the SmrB family. As to quaternary structure, associates with collided ribosomes, but not with correctly translating polysomes.

Functionally, acts as a ribosome collision sensor. Detects stalled/collided disomes (pairs of ribosomes where the leading ribosome is stalled and a second ribosome has collided with it) and endonucleolytically cleaves mRNA at the 5' boundary of the stalled ribosome. Stalled/collided disomes form a new interface (primarily via the 30S subunits) that binds SmrB. Cleaved mRNA becomes available for tmRNA ligation, leading to ribosomal subunit dissociation and rescue of stalled ribosomes. The sequence is that of Ribosome rescue factor SmrB from Escherichia coli O17:K52:H18 (strain UMN026 / ExPEC).